The following is a 175-amino-acid chain: Co-chaperone protein HscB homolog (175 aa).

One can recognise a J domain in the interval 7 to 79; the sequence is SHFELFHLPA…LKRATYLLHL (73 aa).

This sequence belongs to the HscB family. As to quaternary structure, interacts with HscA and stimulates its ATPase activity.

Co-chaperone involved in the maturation of iron-sulfur cluster-containing proteins. Seems to help targeting proteins to be folded toward HscA. This is Co-chaperone protein HscB homolog from Burkholderia thailandensis (strain ATCC 700388 / DSM 13276 / CCUG 48851 / CIP 106301 / E264).